Reading from the N-terminus, the 76-residue chain is UPF0154 protein Sca_0984 (76 aa).

Residues 4 to 24 traverse the membrane as a helical segment; it reads WLAILLIVAALIIGLVGGFFL.

It belongs to the UPF0154 family.

It localises to the cell membrane. In Staphylococcus carnosus (strain TM300), this protein is UPF0154 protein Sca_0984.